The chain runs to 425 residues: Dihydroorotase (425 aa).

His-56 and His-58 together coordinate Zn(2+). Substrate-binding positions include 58–60 (HYR) and Asn-90. Positions 148, 175, and 228 each coordinate Zn(2+). Asn-274 provides a ligand contact to substrate. Residue Asp-301 participates in Zn(2+) binding. Asp-301 is an active-site residue. Substrate-binding positions include His-305 and 319–320 (FG).

It belongs to the metallo-dependent hydrolases superfamily. DHOase family. Class I DHOase subfamily. It depends on Zn(2+) as a cofactor.

The enzyme catalyses (S)-dihydroorotate + H2O = N-carbamoyl-L-aspartate + H(+). The protein operates within pyrimidine metabolism; UMP biosynthesis via de novo pathway; (S)-dihydroorotate from bicarbonate: step 3/3. In terms of biological role, catalyzes the reversible cyclization of carbamoyl aspartate to dihydroorotate. This chain is Dihydroorotase, found in Lactobacillus gasseri (strain ATCC 33323 / DSM 20243 / BCRC 14619 / CIP 102991 / JCM 1131 / KCTC 3163 / NCIMB 11718 / NCTC 13722 / AM63).